Consider the following 158-residue polypeptide: SsrA-binding protein (158 aa).

Positions 132–158 are disordered; that stretch reads KKTHDKRETEKKRDWNREKARLMRDKG. Residues 136-158 are compositionally biased toward basic and acidic residues; it reads DKRETEKKRDWNREKARLMRDKG.

This sequence belongs to the SmpB family.

The protein resides in the cytoplasm. Its function is as follows. Required for rescue of stalled ribosomes mediated by trans-translation. Binds to transfer-messenger RNA (tmRNA), required for stable association of tmRNA with ribosomes. tmRNA and SmpB together mimic tRNA shape, replacing the anticodon stem-loop with SmpB. tmRNA is encoded by the ssrA gene; the 2 termini fold to resemble tRNA(Ala) and it encodes a 'tag peptide', a short internal open reading frame. During trans-translation Ala-aminoacylated tmRNA acts like a tRNA, entering the A-site of stalled ribosomes, displacing the stalled mRNA. The ribosome then switches to translate the ORF on the tmRNA; the nascent peptide is terminated with the 'tag peptide' encoded by the tmRNA and targeted for degradation. The ribosome is freed to recommence translation, which seems to be the essential function of trans-translation. The polypeptide is SsrA-binding protein (Brucella anthropi (strain ATCC 49188 / DSM 6882 / CCUG 24695 / JCM 21032 / LMG 3331 / NBRC 15819 / NCTC 12168 / Alc 37) (Ochrobactrum anthropi)).